We begin with the raw amino-acid sequence, 256 residues long: Protein CUSTOS (256 aa).

Over residues 1 to 19 (MVAPSGAMSDSENSSSSSS) the composition is skewed to low complexity. 3 disordered regions span residues 1 to 83 (MVAP…TPEF), 127 to 163 (FTSI…QRCR), and 227 to 256 (IQKK…KPEN). Residue Ser-62 is modified to Phosphoserine. The span at 63–83 (RRHEVNQHEEDGNDLRTTPEF) shows a compositional bias: basic and acidic residues. Thr-80 carries the post-translational modification Phosphothreonine. Ser-139 carries the post-translational modification Phosphoserine. The Nucleolar localization signal (NLS) signature appears at 228-235 (QKKRKKKA). Residues 228–237 (QKKRKKKAKK) show a composition bias toward basic residues. A compositionally biased stretch (low complexity) spans 246-256 (PAECAAAKPEN).

The protein belongs to the CUSTOS family.

It localises to the nucleus envelope. Plays a role in the regulation of Wnt signaling pathway during early development. In Mus musculus (Mouse), this protein is Protein CUSTOS.